The primary structure comprises 106 residues: ATP-dependent Clp protease adapter protein ClpS (106 aa).

Belongs to the ClpS family. In terms of assembly, binds to the N-terminal domain of the chaperone ClpA.

Involved in the modulation of the specificity of the ClpAP-mediated ATP-dependent protein degradation. The polypeptide is ATP-dependent Clp protease adapter protein ClpS (Vibrio vulnificus (strain CMCP6)).